A 191-amino-acid polypeptide reads, in one-letter code: Ribonuclease HII (191 aa).

An RNase H type-2 domain is found at 16–191 (INLIGIDEAG…KLHRKSFKLL (176 aa)). A divalent metal cation-binding residues include aspartate 22, glutamate 23, and aspartate 110.

This sequence belongs to the RNase HII family. Mn(2+) is required as a cofactor. It depends on Mg(2+) as a cofactor.

It is found in the cytoplasm. It catalyses the reaction Endonucleolytic cleavage to 5'-phosphomonoester.. Endonuclease that specifically degrades the RNA of RNA-DNA hybrids. This is Ribonuclease HII from Campylobacter jejuni subsp. doylei (strain ATCC BAA-1458 / RM4099 / 269.97).